The sequence spans 616 residues: Chaperone protein HscA (616 aa).

Belongs to the heat shock protein 70 family.

In terms of biological role, chaperone involved in the maturation of iron-sulfur cluster-containing proteins. Has a low intrinsic ATPase activity which is markedly stimulated by HscB. Involved in the maturation of IscU. This Citrobacter koseri (strain ATCC BAA-895 / CDC 4225-83 / SGSC4696) protein is Chaperone protein HscA.